Here is a 482-residue protein sequence, read N- to C-terminus: Serine decarboxylase 1 (482 aa).

The segment at 36-55 (EVESPPRPAEEEGEGSPTRR) is disordered. His-200 lines the substrate pocket. Lys-312 bears the N6-(pyridoxal phosphate)lysine mark.

Belongs to the group II decarboxylase family. It depends on pyridoxal 5'-phosphate as a cofactor.

It carries out the reaction L-serine + H(+) = ethanolamine + CO2. Its function is as follows. Catalyzes the biosynthesis of ethanolamine from serine. Decarboxylation of free serine is the major source of ethanolamine production in plants and ethanolamine metabolism is crucial for the synthesis of choline, phosphatidylethanolamine (PE) and phosphatidylcholine (PC), and thus for plant growth. In Oryza sativa subsp. japonica (Rice), this protein is Serine decarboxylase 1 (SDC1).